We begin with the raw amino-acid sequence, 529 residues long: Methionine--tRNA ligase (529 aa).

The 'HIGH' region motif lies at 12-22 (YYVNALPHIGS). Residues Cys-127, Cys-130, Cys-145, and His-148 each coordinate Zn(2+). Residues 301–305 (KMGKS) carry the 'KMSKS' region motif. Lys-304 serves as a coordination point for ATP.

It belongs to the class-I aminoacyl-tRNA synthetase family. MetG type 2A subfamily. Monomer. Zn(2+) is required as a cofactor.

Its subcellular location is the cytoplasm. The catalysed reaction is tRNA(Met) + L-methionine + ATP = L-methionyl-tRNA(Met) + AMP + diphosphate. Its function is as follows. Is required not only for elongation of protein synthesis but also for the initiation of all mRNA translation through initiator tRNA(fMet) aminoacylation. This Thermosynechococcus vestitus (strain NIES-2133 / IAM M-273 / BP-1) protein is Methionine--tRNA ligase.